Reading from the N-terminus, the 623-residue chain is Chaperone protein HtpG (623 aa).

The interval 1–336 is a; substrate-binding; it reads MSETNTQKAA…TEDLPLNVSR (336 aa). A b region spans residues 337–546; that stretch reads EMLQATPVLA…DGGPDLTMQR (210 aa). A c region spans residues 547–623; sequence LMRRSGQAMP…ATLLAGPAAE (77 aa).

The protein belongs to the heat shock protein 90 family. In terms of assembly, homodimer.

It is found in the cytoplasm. Molecular chaperone. Has ATPase activity. The chain is Chaperone protein HtpG from Gluconobacter oxydans (strain 621H) (Gluconobacter suboxydans).